A 31-amino-acid chain; its full sequence is Palustrin-2c (31 aa).

An intrachain disulfide couples Cys23 to Cys29.

As to expression, expressed by the skin glands.

It localises to the secreted. Antimicrobial activity against Gram-negative bacterium E.coli. The protein is Palustrin-2c of Lithobates palustris (Pickerel frog).